Reading from the N-terminus, the 468-residue chain is tRNA threonylcarbamoyladenosine dehydratase (468 aa).

3 helical membrane passes run 15–35, 109–129, and 315–335; these read FWIA…TLEF, NSFV…NMLA, and ILPV…TYVL.

The protein belongs to the HesA/MoeB/ThiF family.

The protein localises to the mitochondrion outer membrane. In terms of biological role, catalyzes the ATP-dependent dehydration of threonylcarbamoyladenosine at position 37 (t(6)A37) to form cyclic t(6)A37 (ct(6)A37) in tRNAs that read codons beginning with adenine. In Schizosaccharomyces pombe (strain 972 / ATCC 24843) (Fission yeast), this protein is tRNA threonylcarbamoyladenosine dehydratase (tcd1).